The primary structure comprises 452 residues: Transcription factor PERIANTHIA (452 aa).

Positions 164–227 constitute a bZIP domain; that stretch reads DQRTLRRLAQ…RGVSADHTHL (64 aa). Positions 166 to 186 are basic motif; the sequence is RTLRRLAQNREAARKSRLRKK. Residues 192-206 are leucine-zipper; sequence LENSRIRLAQLEEEL. The DOG1 domain occupies 233-449; the sequence is VFSFELEYTR…RALSSLWLAR (217 aa).

Belongs to the bZIP family. As to quaternary structure, interacts with GRXC7/ROXY1. Interacts with BOP1 and BOP2.

The protein resides in the nucleus. Transcriptional activator involved in the determination of floral organ number. Acts to determine floral organ patterning by establishing floral organ primordia in specific numbers and positions. Plays a role in regulating stem cell fate by directly controlling AG expression. Binds to the 5'-AAGAAT-3' cis-acting element found in AG promoter. Might represent a target for a post-translational modification by GRXC7/ROXY1. The chain is Transcription factor PERIANTHIA (PAN) from Arabidopsis thaliana (Mouse-ear cress).